A 426-amino-acid chain; its full sequence is Serine hydroxymethyltransferase (426 aa).

(6S)-5,6,7,8-tetrahydrofolate is bound by residues Leu-113 and Gly-117–Leu-119. Residue Lys-222 is modified to N6-(pyridoxal phosphate)lysine. Ser-363–Phe-365 provides a ligand contact to (6S)-5,6,7,8-tetrahydrofolate.

Belongs to the SHMT family. In terms of assembly, homodimer. It depends on pyridoxal 5'-phosphate as a cofactor.

The protein resides in the cytoplasm. It catalyses the reaction (6R)-5,10-methylene-5,6,7,8-tetrahydrofolate + glycine + H2O = (6S)-5,6,7,8-tetrahydrofolate + L-serine. It participates in one-carbon metabolism; tetrahydrofolate interconversion. It functions in the pathway amino-acid biosynthesis; glycine biosynthesis; glycine from L-serine: step 1/1. Functionally, catalyzes the reversible interconversion of serine and glycine with tetrahydrofolate (THF) serving as the one-carbon carrier. This reaction serves as the major source of one-carbon groups required for the biosynthesis of purines, thymidylate, methionine, and other important biomolecules. Also exhibits THF-independent aldolase activity toward beta-hydroxyamino acids, producing glycine and aldehydes, via a retro-aldol mechanism. This chain is Serine hydroxymethyltransferase, found in Phocaeicola vulgatus (strain ATCC 8482 / DSM 1447 / JCM 5826 / CCUG 4940 / NBRC 14291 / NCTC 11154) (Bacteroides vulgatus).